The chain runs to 351 residues: MLQINVKKQLGQLALQANIQVPDQGVTAIFGLSGSGKTSLINLVSGLIQPDEGFICLNDRTLVDMESQESLPTHLRKIGYVFQDARLFPHYTVKGNLRYGMKNVSQDDFNYIVDLLGITHLLKRYPLTLSGGEKQRVAIGRALLTDPDILLMDEPLSALDVPRKRELMQYLERLSKEINIPILYVTHSLDELLRLADRVVLMENGIVKAYDRVEKIWNSPIFAPWKGESEQSSVLALPVHLHNPPYKMTALSLGEQVLWIHQVPANVGERVRVCIYSSDVSITLQKPEQTSIRNILRGKITQIEIQDSRVDLAVLVEGHKIWASISKWAQNELRFAIGQDVYVQIKAVSVM.

Residues Met1 to Ser229 form the ABC transporter domain. Residue Gly31–Thr38 coordinates ATP. Residues Gln289–Met351 form the Mop domain.

This sequence belongs to the ABC transporter superfamily. Molybdate importer (TC 3.A.1.8) family. As to quaternary structure, the complex is composed of two ATP-binding proteins (ModC), two transmembrane proteins (ModB) and a solute-binding protein (ModA).

The protein resides in the cell inner membrane. The catalysed reaction is molybdate(out) + ATP + H2O = molybdate(in) + ADP + phosphate + H(+). In terms of biological role, part of the ABC transporter complex ModABC involved in molybdenum import. Responsible for energy coupling to the transport system. The polypeptide is Molybdenum import ATP-binding protein ModC (Haemophilus influenzae (strain ATCC 51907 / DSM 11121 / KW20 / Rd)).